The chain runs to 222 residues: Small ribosomal subunit protein uS3 (222 aa).

The region spanning 39–108 (IRRHIKEKLY…TISLDIKEIK (70 aa)) is the KH type-2 domain.

Belongs to the universal ribosomal protein uS3 family. Part of the 30S ribosomal subunit. Forms a tight complex with proteins S10 and S14.

Functionally, binds the lower part of the 30S subunit head. Binds mRNA in the 70S ribosome, positioning it for translation. In Caldicellulosiruptor saccharolyticus (strain ATCC 43494 / DSM 8903 / Tp8T 6331), this protein is Small ribosomal subunit protein uS3.